Here is a 119-residue protein sequence, read N- to C-terminus: Phospholipase A2 A2-actitoxin-Cgg2a (119 aa).

Disulfide bonds link Cys25–Cys119, Cys27–Cys43, Cys42–Cys101, Cys49–Cys94, Cys61–Cys87, and Cys78–Cys92. Residues Gly28 and Gly30 each contribute to the Ca(2+) site. His46 is an active-site residue. Asp47 contacts Ca(2+). Asp95 is a catalytic residue.

Belongs to the phospholipase A2 family. In terms of assembly, homodimer. Ca(2+) is required as a cofactor.

It is found in the secreted. It localises to the nematocyst. It carries out the reaction a 1,2-diacyl-sn-glycero-3-phosphocholine + H2O = a 1-acyl-sn-glycero-3-phosphocholine + a fatty acid + H(+). Functionally, sea anemone phospholipase A2 (PLA2). When incubated with plasma, this protein shows a moderate anticoagulant activity (0.15 ug of enzyme/200 uL of plasma), inhibiting clotting induced by thrombin. This enzyme also induces myotoxicity, and edema. PLA2 catalyzes the calcium-dependent hydrolysis of the 2-acyl groups in 3-sn-phosphoglycerides. The sequence is that of Phospholipase A2 A2-actitoxin-Cgg2a from Condylactis gigantea (Giant Caribbean anemone).